The primary structure comprises 318 residues: Receptor homology region, transmembrane domain- and RING domain-containing protein 5 (318 aa).

Residues 1 to 20 (MNYSWITIMSLLVICKLASA) form the signal peptide. At 22-163 (VVLIGKNTIL…IPGFGISSWS (142 aa)) the chain is on the lumenal side. Cysteine 62 and cysteine 87 are oxidised to a cystine. Positions 70–143 (EKRSKYRSSY…RASGEVLKGY (74 aa)) constitute a PA domain. Asparagine 121 carries N-linked (GlcNAc...) asparagine glycosylation. The helical transmembrane segment at 164–184 (IMGITFISLLAMSAILATCFV) threads the bilayer. Residues 185–318 (VRRHQIRQSV…DLPIVVRVYL (134 aa)) are Cytoplasmic-facing. The RING-type; atypical zinc finger occupies 233-275 (CAICIDDYCVGEKLRILPCKHKYHAVCIDSWLGRCRSFCPVCK).

It is found in the prevacuolar compartment membrane. Its subcellular location is the protein storage vacuole membrane. Functionally, involved in the trafficking of vacuolar proteins. May function as a sorting receptor for protein trafficking to the protein storage vacuole (PSV). This Arabidopsis thaliana (Mouse-ear cress) protein is Receptor homology region, transmembrane domain- and RING domain-containing protein 5 (RMR5).